We begin with the raw amino-acid sequence, 233 residues long: MYEGLEDLKVDTVNRKTLAKQVIERIVHLLSSGQLRAGDKLPTEMELMDILHVSRPVLREALSSLETLGVITRKTRGGTYFNDKIGMQPFSVMLALATDNLPAIIEARMALELGLVTIAAEKINEEELQRLQKTIDDIANSTDNHYGEADKEFHRIIALSANNPVVEGMIQSLLITHAKIDSQIPYRERDVTVEYHKKIYDALAKRDPYKAHYHMYEHLKFVRDKILKGMDEK.

Residues 16 to 84 (KTLAKQVIER…TRGGTYFNDK (69 aa)) enclose the HTH gntR-type domain. The segment at residues 44 to 63 (EMELMDILHVSRPVLREALS) is a DNA-binding region (H-T-H motif).

This is an uncharacterized protein from Bacillus subtilis (strain 168).